The chain runs to 224 residues: Uracil-DNA glycosylase 2 (224 aa).

Asp64 acts as the Proton acceptor in catalysis.

The protein belongs to the uracil-DNA glycosylase (UDG) superfamily. UNG family.

It localises to the cytoplasm. It catalyses the reaction Hydrolyzes single-stranded DNA or mismatched double-stranded DNA and polynucleotides, releasing free uracil.. Excises uracil residues from the DNA which can arise as a result of misincorporation of dUMP residues by DNA polymerase or due to deamination of cytosine. The protein is Uracil-DNA glycosylase 2 of Listeria monocytogenes serotype 4b (strain F2365).